Here is a 147-residue protein sequence, read N- to C-terminus: MSNFTAEDKAAITSLWAKVNVEDAGGETLGRLLVVYPWTQRFFDSFGSLSSPSAIMGNPKVKAHGAKVLTSLGEAIKNLDDLKGTFGQLSELHCDKLHVDPENFRLLGNVLVTVLAIHHGKEFTPEVQASWQKMVAGVASALGSRYH.

The 145-residue stretch at 3–147 folds into the Globin domain; that stretch reads NFTAEDKAAI…VASALGSRYH (145 aa). Thr13 is modified (phosphothreonine). Phosphoserine is present on residues Ser45, Ser51, and Ser53. Residue Lys60 is modified to N6-acetyllysine. His64 lines the heme b pocket. Lys83 bears the N6-acetyllysine mark. His93 contributes to the heme b binding site. An S-nitrosocysteine modification is found at Cys94. A phosphoserine mark is found at Ser140 and Ser144.

It belongs to the globin family. In terms of assembly, heterotetramer of two alpha chains and two gamma chains in fetal hemoglobin (Hb F). Red blood cells.

Functionally, gamma chains make up the fetal hemoglobin F, in combination with alpha chains. This is Hemoglobin subunit gamma-2 (HBG2) from Cebus albifrons (White-fronted capuchin).